Reading from the N-terminus, the 995-residue chain is Aconitate hydratase 2, mitochondrial (995 aa).

The transit peptide at 1–83 directs the protein to the mitochondrion; it reads MYRRATSGVR…PASLRAQARN (83 aa). Substrate is bound by residues glutamine 187 and 306-308; that span reads DSH. Positions 538, 604, and 607 each coordinate [4Fe-4S] cluster. Substrate contacts are provided by residues arginine 637, arginine 642, arginine 800, and 881–882; that span reads SR.

This sequence belongs to the aconitase/IPM isomerase family. Monomer. It depends on [4Fe-4S] cluster as a cofactor. Mostly expressed in roots, leaves and flowers, also present in stems, and, at low levels, in seeds.

Its subcellular location is the mitochondrion. It catalyses the reaction citrate = D-threo-isocitrate. Its pathway is carbohydrate metabolism; tricarboxylic acid cycle; isocitrate from oxaloacetate: step 2/2. Its function is as follows. Catalyzes the isomerization of citrate to isocitrate via cis-aconitate. Contributes to oxidative stress tolerance. Involved in acetate assimilation. This Arabidopsis thaliana (Mouse-ear cress) protein is Aconitate hydratase 2, mitochondrial.